Reading from the N-terminus, the 170-residue chain is Adenine phosphoribosyltransferase (170 aa).

It belongs to the purine/pyrimidine phosphoribosyltransferase family. In terms of assembly, homodimer.

It is found in the cytoplasm. It catalyses the reaction AMP + diphosphate = 5-phospho-alpha-D-ribose 1-diphosphate + adenine. It functions in the pathway purine metabolism; AMP biosynthesis via salvage pathway; AMP from adenine: step 1/1. In terms of biological role, catalyzes a salvage reaction resulting in the formation of AMP, that is energically less costly than de novo synthesis. The chain is Adenine phosphoribosyltransferase from Nitrosopumilus maritimus (strain SCM1).